The sequence spans 93 residues: Cell division protein FtsB (93 aa).

Residues 1-3 (MRI) lie on the Cytoplasmic side of the membrane. A helical membrane pass occupies residues 4–21 (FVIALTLLFGWLQYTLWF). Residues 22–93 (GKNGVSDYYT…FYRIVDEEEH (72 aa)) are Periplasmic-facing. Positions 31 to 75 (TVEDEIEVQQQVNSKLQARNNEMFAEIDDLRQGLDAIEERARHEL) form a coiled coil.

It belongs to the FtsB family. As to quaternary structure, part of a complex composed of FtsB, FtsL and FtsQ.

The protein localises to the cell inner membrane. Essential cell division protein. May link together the upstream cell division proteins, which are predominantly cytoplasmic, with the downstream cell division proteins, which are predominantly periplasmic. The protein is Cell division protein FtsB of Vibrio campbellii (strain ATCC BAA-1116).